Consider the following 329-residue polypeptide: Acetyl-coenzyme A carboxylase carboxyl transferase subunit alpha (329 aa).

In terms of domain architecture, CoA carboxyltransferase C-terminal spans 40–294; that stretch reads QLESLAARRR…RAALERHLGE (255 aa).

Belongs to the AccA family. In terms of assembly, acetyl-CoA carboxylase is a heterohexamer composed of biotin carboxyl carrier protein (AccB), biotin carboxylase (AccC) and two subunits each of ACCase subunit alpha (AccA) and ACCase subunit beta (AccD).

Its subcellular location is the cytoplasm. The catalysed reaction is N(6)-carboxybiotinyl-L-lysyl-[protein] + acetyl-CoA = N(6)-biotinyl-L-lysyl-[protein] + malonyl-CoA. The protein operates within lipid metabolism; malonyl-CoA biosynthesis; malonyl-CoA from acetyl-CoA: step 1/1. In terms of biological role, component of the acetyl coenzyme A carboxylase (ACC) complex. First, biotin carboxylase catalyzes the carboxylation of biotin on its carrier protein (BCCP) and then the CO(2) group is transferred by the carboxyltransferase to acetyl-CoA to form malonyl-CoA. The polypeptide is Acetyl-coenzyme A carboxylase carboxyl transferase subunit alpha (Parasynechococcus marenigrum (strain WH8102)).